The sequence spans 94 residues: Integration host factor subunit beta (94 aa).

The protein belongs to the bacterial histone-like protein family. In terms of assembly, heterodimer of an alpha and a beta chain.

In terms of biological role, this protein is one of the two subunits of integration host factor, a specific DNA-binding protein that functions in genetic recombination as well as in transcriptional and translational control. The sequence is that of Integration host factor subunit beta from Nitrosospira multiformis (strain ATCC 25196 / NCIMB 11849 / C 71).